A 197-amino-acid polypeptide reads, in one-letter code: Pyridoxal 5'-phosphate synthase subunit PdxT (197 aa).

53–55 (GES) contributes to the L-glutamine binding site. The active-site Nucleophile is Cys-85. L-glutamine-binding positions include Arg-114 and 142–143 (IR). Residues His-179 and Glu-181 each act as charge relay system in the active site.

Belongs to the glutaminase PdxT/SNO family. In the presence of PdxS, forms a dodecamer of heterodimers. Only shows activity in the heterodimer.

It catalyses the reaction aldehydo-D-ribose 5-phosphate + D-glyceraldehyde 3-phosphate + L-glutamine = pyridoxal 5'-phosphate + L-glutamate + phosphate + 3 H2O + H(+). The catalysed reaction is L-glutamine + H2O = L-glutamate + NH4(+). It participates in cofactor biosynthesis; pyridoxal 5'-phosphate biosynthesis. In terms of biological role, catalyzes the hydrolysis of glutamine to glutamate and ammonia as part of the biosynthesis of pyridoxal 5'-phosphate. The resulting ammonia molecule is channeled to the active site of PdxS. This is Pyridoxal 5'-phosphate synthase subunit PdxT from Thermococcus onnurineus (strain NA1).